We begin with the raw amino-acid sequence, 196 residues long: Thymidine kinase (196 aa).

ATP-binding positions include 9-16 (SAMNAGKS) and 87-90 (DECQ). E88 acts as the Proton acceptor in catalysis. Zn(2+) contacts are provided by C145, C147, C182, and H185.

It belongs to the thymidine kinase family. Homotetramer.

It localises to the cytoplasm. The catalysed reaction is thymidine + ATP = dTMP + ADP + H(+). The protein is Thymidine kinase of Yersinia pestis.